Reading from the N-terminus, the 317-residue chain is MRSYLDFEKPVAELEAKVEELRALASAGDGVTITDEVQRLETKAREALLALYANLTPWQKTLVARHPQRPHFADFAKGLFEDFTPLAGDRKFGEDEAIIGGFARFRGEAVCVLGHEKGSTTETRIRHNFGMARPEGYRKAVRIMELADRFGIPLISLVDTAGAYPGIGAEERGQAEAIARSTDACLALGAPNVALVIGEGGSGGAIAIATANKVLMMEHAIYSVISPEGAASILWRDTAKAQEAATNMKITAQDLLKFGIIDAIVKEPPGGAHRDPEATIGAAGDAIADALSQLAGLDGPAVRKARRDKFLAIGRSL.

The 255-residue stretch at 39 to 293 (RLETKAREAL…GDAIADALSQ (255 aa)) folds into the CoA carboxyltransferase C-terminal domain.

It belongs to the AccA family. In terms of assembly, acetyl-CoA carboxylase is a heterohexamer composed of biotin carboxyl carrier protein (AccB), biotin carboxylase (AccC) and two subunits each of ACCase subunit alpha (AccA) and ACCase subunit beta (AccD).

The protein localises to the cytoplasm. It carries out the reaction N(6)-carboxybiotinyl-L-lysyl-[protein] + acetyl-CoA = N(6)-biotinyl-L-lysyl-[protein] + malonyl-CoA. The protein operates within lipid metabolism; malonyl-CoA biosynthesis; malonyl-CoA from acetyl-CoA: step 1/1. Functionally, component of the acetyl coenzyme A carboxylase (ACC) complex. First, biotin carboxylase catalyzes the carboxylation of biotin on its carrier protein (BCCP) and then the CO(2) group is transferred by the carboxyltransferase to acetyl-CoA to form malonyl-CoA. This chain is Acetyl-coenzyme A carboxylase carboxyl transferase subunit alpha, found in Xanthobacter autotrophicus (strain ATCC BAA-1158 / Py2).